A 209-amino-acid chain; its full sequence is Ribosomal RNA large subunit methyltransferase E (209 aa).

G63, W65, D83, D99, and D124 together coordinate S-adenosyl-L-methionine. K164 (proton acceptor) is an active-site residue.

The protein belongs to the class I-like SAM-binding methyltransferase superfamily. RNA methyltransferase RlmE family.

The protein resides in the cytoplasm. It carries out the reaction uridine(2552) in 23S rRNA + S-adenosyl-L-methionine = 2'-O-methyluridine(2552) in 23S rRNA + S-adenosyl-L-homocysteine + H(+). Its function is as follows. Specifically methylates the uridine in position 2552 of 23S rRNA at the 2'-O position of the ribose in the fully assembled 50S ribosomal subunit. The protein is Ribosomal RNA large subunit methyltransferase E of Proteus mirabilis (strain HI4320).